Reading from the N-terminus, the 120-residue chain is Spermidine export protein MdtJ (120 aa).

Helical transmembrane passes span 1-21 (MFYW…TLSM), 31-51 (AGFI…SFAV), 54-74 (IALG…ITIF), and 81-101 (EALS…IVLI).

This sequence belongs to the drug/metabolite transporter (DMT) superfamily. Small multidrug resistance (SMR) (TC 2.A.7.1) family. MdtJ subfamily. In terms of assembly, forms a complex with MdtI.

The protein resides in the cell inner membrane. In terms of biological role, catalyzes the excretion of spermidine. The protein is Spermidine export protein MdtJ of Salmonella paratyphi A (strain ATCC 9150 / SARB42).